The chain runs to 912 residues: Translation initiation factor IF-2 (912 aa).

The disordered stretch occupies residues 185–204; the sequence is NATRPKRKTKEEKQKEREER. Basic and acidic residues predominate over residues 193-204; sequence TKEEKQKEREER. A tr-type G domain is found at 411 to 581; sequence LRPPIVTIMG…LLEAELLDLK (171 aa). Positions 420–427 are G1; it reads GHVDHGKT. GTP is bound at residue 420 to 427; it reads GHVDHGKT. The segment at 445–449 is G2; sequence GITQH. The tract at residues 467 to 470 is G3; it reads DTPG. Residues 467-471 and 521-524 each bind GTP; these read DTPGH and NKID. Residues 521–524 are G4; the sequence is NKID. Residues 557–559 form a G5 region; sequence SAK.

Belongs to the TRAFAC class translation factor GTPase superfamily. Classic translation factor GTPase family. IF-2 subfamily.

It is found in the cytoplasm. In terms of biological role, one of the essential components for the initiation of protein synthesis. Protects formylmethionyl-tRNA from spontaneous hydrolysis and promotes its binding to the 30S ribosomal subunits. Also involved in the hydrolysis of GTP during the formation of the 70S ribosomal complex. The protein is Translation initiation factor IF-2 of Azobacteroides pseudotrichonymphae genomovar. CFP2.